We begin with the raw amino-acid sequence, 93 residues long: MEHGEKHITIVDDQGNEQLCEVLFTFENDTFNKSYVLYYPIDAQDDDEIEIHASSFEPNENGEDGELMPIETDEEWEMIEETLNTFLAEEDEE.

Belongs to the UPF0473 family.

In Bacillus velezensis (strain DSM 23117 / BGSC 10A6 / LMG 26770 / FZB42) (Bacillus amyloliquefaciens subsp. plantarum), this protein is UPF0473 protein RBAM_024480.